The sequence spans 363 residues: L-arabinitol 4-dehydrogenase (363 aa).

Residues C53, H78, E79, C108, C111, C114, C122, and E163 each coordinate Zn(2+). NAD(+)-binding positions include 190–191, D211, R216, I282, and 306–308; these read PI and QYR.

This sequence belongs to the zinc-containing alcohol dehydrogenase family. In terms of assembly, homotetramer. Zn(2+) serves as cofactor.

The catalysed reaction is L-arabinitol + NAD(+) = L-xylulose + NADH + H(+). The protein operates within carbohydrate degradation; L-arabinose degradation via L-arabinitol; D-xylulose 5-phosphate from L-arabinose (fungal route): step 2/5. Its function is as follows. Catalyzes the NAD-dependent oxidation of L-arabinitol to L-xylulose in the fungal L-arabinose catabolic pathway. L-arabinose catabolism is important for using plant material as a carbon source. Not active on D-arabinitol, D-sorbitol and D-mannitol. This chain is L-arabinitol 4-dehydrogenase (ard-1), found in Neurospora crassa (strain ATCC 24698 / 74-OR23-1A / CBS 708.71 / DSM 1257 / FGSC 987).